We begin with the raw amino-acid sequence, 329 residues long: DNA-directed RNA polymerase subunit alpha (329 aa).

Residues 1-235 (MQGSVTEFLK…EQLDAFVDLR (235 aa)) form an alpha N-terminal domain (alpha-NTD) region. The interval 249 to 329 (FDPILLRPVD…NWPPASIAED (81 aa)) is alpha C-terminal domain (alpha-CTD).

Belongs to the RNA polymerase alpha chain family. As to quaternary structure, homodimer. The RNAP catalytic core consists of 2 alpha, 1 beta, 1 beta' and 1 omega subunit. When a sigma factor is associated with the core the holoenzyme is formed, which can initiate transcription.

It carries out the reaction RNA(n) + a ribonucleoside 5'-triphosphate = RNA(n+1) + diphosphate. Its function is as follows. DNA-dependent RNA polymerase catalyzes the transcription of DNA into RNA using the four ribonucleoside triphosphates as substrates. The chain is DNA-directed RNA polymerase subunit alpha from Histophilus somni (strain 129Pt) (Haemophilus somnus).